A 414-amino-acid chain; its full sequence is Stork-head box protein ham-1 (414 aa).

Residues 1-31 (MTYLAVVLNGPKAKNGRKVFDSFLEQNRQMF) form an essential for association with cell cortex region. Positions 93–170 (QQVEQMHFVP…MADHYFVSVP (78 aa)) constitute a Winged helix Storkhead-box1 domain. A disordered region spans residues 282–362 (ECQRKARRRN…SNEEAGSISD (81 aa)). A bi-partite nuclear localization signal region spans residues 285 to 295 (RKARRRNHPRR). Positions 321 to 327 (PTRRRAR) are nuclear localization signal. Over residues 332-351 (LRSSTPNNSDSAYSISPPHT) the composition is skewed to polar residues.

It is found in the cytoplasm. Its subcellular location is the cell cortex. It localises to the nucleus. Probable transcription factor. Required for asymmetric cell division in neuroblasts, perhaps acting by regulating spindle positioning and myosin polarization, and thus the position of the cleavage plane. Required to produce daughter cell size asymmetry in neuroblasts undergoing asymmetric cell division, usually giving rise to one precursor cell and one apoptotic cell. Positively modulates expression of the serine/threonine kinase pig-1/MELK during asymmetric division of the Q.a neuroblast. Plays a role in neural fate specification in several dopaminergic lineages, including the hermaphrodite-specific neuron (HSN)/phasmid neuron (PHB), acting in concert with the kinase, ham-1, and the T-box protein tbx-2 and the homeobox protein egl-5. This chain is Stork-head box protein ham-1, found in Caenorhabditis elegans.